The chain runs to 246 residues: 1-(5-phosphoribosyl)-5-[(5-phosphoribosylamino)methylideneamino] imidazole-4-carboxamide isomerase (246 aa).

Residue Asp10 is the Proton acceptor of the active site.

Belongs to the HisA/HisF family.

The protein resides in the cytoplasm. The enzyme catalyses 1-(5-phospho-beta-D-ribosyl)-5-[(5-phospho-beta-D-ribosylamino)methylideneamino]imidazole-4-carboxamide = 5-[(5-phospho-1-deoxy-D-ribulos-1-ylimino)methylamino]-1-(5-phospho-beta-D-ribosyl)imidazole-4-carboxamide. It functions in the pathway amino-acid biosynthesis; L-histidine biosynthesis; L-histidine from 5-phospho-alpha-D-ribose 1-diphosphate: step 4/9. The protein is 1-(5-phosphoribosyl)-5-[(5-phosphoribosylamino)methylideneamino] imidazole-4-carboxamide isomerase of Corynebacterium efficiens (strain DSM 44549 / YS-314 / AJ 12310 / JCM 11189 / NBRC 100395).